The chain runs to 119 residues: Integration host factor subunit beta (119 aa).

The segment at 93–119 is disordered; it reads AGGLADTQPDGDAPDQPQPTLLGLHAM. Low complexity predominate over residues 97-112; sequence ADTQPDGDAPDQPQPT.

This sequence belongs to the bacterial histone-like protein family. Heterodimer of an alpha and a beta chain.

Functionally, this protein is one of the two subunits of integration host factor, a specific DNA-binding protein that functions in genetic recombination as well as in transcriptional and translational control. This is Integration host factor subunit beta from Bordetella petrii (strain ATCC BAA-461 / DSM 12804 / CCUG 43448).